Reading from the N-terminus, the 258-residue chain is Shikimate dehydrogenase (NADP(+)) (258 aa).

Shikimate is bound by residues 14–16 and Thr61; that span reads SES. The Proton acceptor role is filled by Lys65. Asn86 and Asp101 together coordinate shikimate. NADP(+)-binding positions include 125–129 and Leu211; that span reads GSGGS. Tyr213 contacts shikimate. An NADP(+)-binding site is contributed by Gly234.

This sequence belongs to the shikimate dehydrogenase family. In terms of assembly, homodimer.

The enzyme catalyses shikimate + NADP(+) = 3-dehydroshikimate + NADPH + H(+). The protein operates within metabolic intermediate biosynthesis; chorismate biosynthesis; chorismate from D-erythrose 4-phosphate and phosphoenolpyruvate: step 4/7. In terms of biological role, involved in the biosynthesis of the chorismate, which leads to the biosynthesis of aromatic amino acids. Catalyzes the reversible NADPH linked reduction of 3-dehydroshikimate (DHSA) to yield shikimate (SA). The protein is Shikimate dehydrogenase (NADP(+)) of Clostridium botulinum (strain ATCC 19397 / Type A).